A 567-amino-acid polypeptide reads, in one-letter code: Proline--tRNA ligase (567 aa).

It belongs to the class-II aminoacyl-tRNA synthetase family. ProS type 1 subfamily. In terms of assembly, homodimer.

It is found in the cytoplasm. The enzyme catalyses tRNA(Pro) + L-proline + ATP = L-prolyl-tRNA(Pro) + AMP + diphosphate. Its function is as follows. Catalyzes the attachment of proline to tRNA(Pro) in a two-step reaction: proline is first activated by ATP to form Pro-AMP and then transferred to the acceptor end of tRNA(Pro). As ProRS can inadvertently accommodate and process non-cognate amino acids such as alanine and cysteine, to avoid such errors it has two additional distinct editing activities against alanine. One activity is designated as 'pretransfer' editing and involves the tRNA(Pro)-independent hydrolysis of activated Ala-AMP. The other activity is designated 'posttransfer' editing and involves deacylation of mischarged Ala-tRNA(Pro). The misacylated Cys-tRNA(Pro) is not edited by ProRS. The chain is Proline--tRNA ligase from Staphylococcus aureus (strain MRSA252).